A 382-amino-acid polypeptide reads, in one-letter code: Lipid-A-disaccharide synthase (382 aa).

It belongs to the LpxB family.

It carries out the reaction 2-N,3-O-bis[(3R)-3-hydroxytetradecanoyl]-alpha-D-glucosaminyl 1-phosphate + UDP-2-N,3-O-bis[(3R)-3-hydroxytetradecanoyl]-alpha-D-glucosamine = lipid A disaccharide (E. coli) + UDP + H(+). The enzyme catalyses a lipid X + a UDP-2-N,3-O-bis[(3R)-3-hydroxyacyl]-alpha-D-glucosamine = a lipid A disaccharide + UDP + H(+). Its pathway is glycolipid biosynthesis; lipid IV(A) biosynthesis; lipid IV(A) from (3R)-3-hydroxytetradecanoyl-[acyl-carrier-protein] and UDP-N-acetyl-alpha-D-glucosamine: step 5/6. Functionally, condensation of UDP-2,3-diacylglucosamine and 2,3-diacylglucosamine-1-phosphate to form lipid A disaccharide, a precursor of lipid A, a phosphorylated glycolipid that anchors the lipopolysaccharide to the outer membrane of the cell. The protein is Lipid-A-disaccharide synthase of Salmonella paratyphi B (strain ATCC BAA-1250 / SPB7).